We begin with the raw amino-acid sequence, 675 residues long: Sodium/myo-inositol cotransporter 2 (675 aa).

The Extracellular portion of the chain corresponds to 1–27; the sequence is MESGTSSPQPPQLDPLDAFPQKGLEPG. A helical membrane pass occupies residues 28–48; sequence DIAVLVLYFLFVLAVGLWSTV. Topologically, residues 49–65 are cytoplasmic; that stretch reads KTKRDTVKGYFLAGGDM. Residues 66 to 88 traverse the membrane as a helical segment; sequence VWWPVGASLFASNVGSGHFIGLA. The Extracellular portion of the chain corresponds to 89–102; that stretch reads GSGAATGISVSAYE. Residues 103–123 form a helical membrane-spanning segment; it reads LNGLFSVLMLAWIFLPIYIAG. Residues 124 to 135 are Cytoplasmic-facing; sequence QVTTMPEYLRKR. A helical membrane pass occupies residues 136-156; sequence FGGIRIPIILAVLYLFIYIFT. The Extracellular segment spans residues 157–180; sequence KISVDMYAGAIFIQQSLHLDLYLA. A helical membrane pass occupies residues 181–201; it reads IVGLLAITAVYTVAGGLAAVI. Over 202 to 208 the chain is Cytoplasmic; sequence YTDALQT. A helical membrane pass occupies residues 209–229; sequence LIMLIGALTLMGYSFAAVGGM. The Extracellular segment spans residues 230–272; it reads EGLKEKYFLALASNRSENSSCGLPREDAFHIFRDPLTSDLPWP. The chain crosses the membrane as a helical span at residues 273–293; it reads GVLFGMSIPSLWYWCTDQVIV. Residues 294-308 are Cytoplasmic-facing; that stretch reads QRTLAAKNLSHAKGG. The helical transmembrane segment at 309–329 threads the bilayer; sequence ALMAAYLKVLPLFIMVFPGMV. Residues 330-375 lie on the Extracellular side of the membrane; that stretch reads SRILFPDQVACADPEICQKICSNPSGCSDIAYPKLVLELLPTGLRG. A helical membrane pass occupies residues 376-396; sequence LMMAVMVAALMSSLTSIFNSA. The Cytoplasmic segment spans residues 397–418; that stretch reads STIFTMDLWNHLRPRASEKELM. The helical transmembrane segment at 419–439 threads the bilayer; the sequence is IVGRVFVLLLVLVSILWIPVV. The Extracellular segment spans residues 440-446; the sequence is QASQGGQ. Residues 447–467 form a helical membrane-spanning segment; the sequence is LFIYIQSISSYLQPPVAVVFI. Topologically, residues 468–479 are cytoplasmic; it reads MGCFWKRTNEKG. A helical membrane pass occupies residues 480 to 500; that stretch reads AFWGLISGLLLGLVRLVLDFI. Topologically, residues 501–521 are extracellular; sequence YVQPRCDQPDERPVLVKSIHY. Residues 522-542 form a helical membrane-spanning segment; it reads LYFSMILSTVTLITVSTVSWF. At 543-654 the chain is on the cytoplasmic side; that stretch reads TEPPSKEMVS…SLEENPLVKT (112 aa). The chain crosses the membrane as a helical span at residues 655-675; sequence LLDVNLIFCVSCAIFIWGYFA.

This sequence belongs to the sodium:solute symporter (SSF) (TC 2.A.21) family. In terms of tissue distribution, highest expression in heart, skeletal muscle, kidney, liver and placenta. Weaker expression in brain, colon, spleen, lung and peripheral blood leukocytes.

It is found in the membrane. The protein localises to the apical cell membrane. It catalyses the reaction myo-inositol(out) + 2 Na(+)(out) = myo-inositol(in) + 2 Na(+)(in). The catalysed reaction is 1D-chiro-inositol(out) + 2 Na(+)(out) = 1D-chiro-inositol(in) + 2 Na(+)(in). The enzyme catalyses D-glucose(out) + 2 Na(+)(out) = D-glucose(in) + 2 Na(+)(in). It carries out the reaction D-xylose(out) + 2 Na(+)(out) = D-xylose(in) + 2 Na(+)(in). Its activity is regulated as follows. MI transport activity inhibited by D-chiro-inositol (DCI), phlorizin (Pz) and sodium (Na(+)). Insulin increases D-chiro-inositol uptake. In terms of biological role, involved in the sodium-dependent cotransport of myo-inositol (MI) with a Na(+):MI stoichiometry of 2:1. Exclusively responsible for apical MI transport and absorption in intestine. Can also transport D-chiro-inositol (DCI) but not L-fucose. Exhibits stereospecific cotransport of both D-glucose and D-xylose. May induce apoptosis through the TNF-alpha, PDCD1 pathway. May play a role in the regulation of MI concentration in serum, involving reabsorption in at least the proximal tubule of the kidney. The sequence is that of Sodium/myo-inositol cotransporter 2 from Homo sapiens (Human).